A 399-amino-acid chain; its full sequence is Subtilisin-like protease CPC735_033790 (399 aa).

The N-terminal stretch at 1-20 (MGFLSSAILLLITAFPAAQA) is a signal peptide. The propeptide occupies 21–117 (GEMINAAAGA…VEPDRMVNIT (97 aa)). In terms of domain architecture, Inhibitor I9 spans 37–116 (SYIVVMNEGI…YVEPDRMVNI (80 aa)). N-linked (GlcNAc...) asparagine glycosylation occurs at N115. In terms of domain architecture, Peptidase S8 spans 127 to 399 (SYGLGRISNK…NRLLYNNSGV (273 aa)). Active-site charge relay system residues include D159 and H190. Residue N251 is glycosylated (N-linked (GlcNAc...) asparagine). Residue S345 is the Charge relay system of the active site. An N-linked (GlcNAc...) asparagine glycan is attached at N395.

The protein belongs to the peptidase S8 family.

The protein resides in the secreted. Secreted subtilisin-like serine protease with keratinolytic activity that contributes to pathogenicity. In Coccidioides posadasii (strain C735) (Valley fever fungus), this protein is Subtilisin-like protease CPC735_033790.